We begin with the raw amino-acid sequence, 325 residues long: TNFAIP3-interacting protein 3 (325 aa).

2 disordered regions span residues 1 to 30 (MAHFVQGTSRMIAAESSTEHKECAEPSTRK) and 84 to 129 (RFLS…RLNE). Over residues 17–28 (STEHKECAEPST) the composition is skewed to basic and acidic residues. Residues 27-265 (STRKNLMNSL…LEKQLKQMYC (239 aa)) are a coiled coil. The interval 190–248 (HEEMRTEMEVLKQQVQIYEEDFKKERSDRERLNQEKEELQQINETSQSQLNRLNSQIKA) is ubiquitin-binding domain (UBD).

Interacts with TNFAIP3. Interacts with polyubiquitin. As to expression, highly expressed in lung, lymph node, thymus and fetal liver. Expressed at lower levels in bone marrow, brain, kidney, spleen, leukocytes and tonsils. Could be detected in heart, salivary gland, adrenal gland, pancreas, ovary and fetal brain. High levels detected in liver, colon, small intestine, muscle, stomach, testis, placenta, thyroid, uterus, prostate, skin and PBL.

Binds to zinc finger protein TNFAIP3 and inhibits NF-kappa-B activation induced by tumor necrosis factor, Toll-like receptor 4 (TLR4), interleukin-1 and 12-O-tetradecanoylphorbol-13-acetate. Overexpression inhibits NF-kappa-B-dependent gene expression in response to lipopolysaccharide at a level downstream of TRAF6 and upstream of IKBKB. NF-kappa-B inhibition is independent of TNFAIP3 binding. The protein is TNFAIP3-interacting protein 3 of Homo sapiens (Human).